The primary structure comprises 195 residues: Protein GrpE (195 aa).

The protein belongs to the GrpE family. In terms of assembly, homodimer.

It localises to the cytoplasm. Participates actively in the response to hyperosmotic and heat shock by preventing the aggregation of stress-denatured proteins, in association with DnaK and GrpE. It is the nucleotide exchange factor for DnaK and may function as a thermosensor. Unfolded proteins bind initially to DnaJ; upon interaction with the DnaJ-bound protein, DnaK hydrolyzes its bound ATP, resulting in the formation of a stable complex. GrpE releases ADP from DnaK; ATP binding to DnaK triggers the release of the substrate protein, thus completing the reaction cycle. Several rounds of ATP-dependent interactions between DnaJ, DnaK and GrpE are required for fully efficient folding. The sequence is that of Protein GrpE from Blochmanniella floridana.